A 389-amino-acid polypeptide reads, in one-letter code: tRNA (guanine-N(7)-)-methyltransferase non-catalytic subunit TRM82 (389 aa).

WD repeat units lie at residues 44-86 (QNVP…HQLK), 134-179 (GHTS…KGFL), and 184-222 (QFVS…LITE).

Belongs to the WD repeat TRM82 family. As to quaternary structure, forms a heterodimer with the catalytic subunit TRM8.

It is found in the nucleus. It participates in tRNA modification; N(7)-methylguanine-tRNA biosynthesis. In terms of biological role, required for the formation of N(7)-methylguanine at position 46 (m7G46) in tRNA. In the complex, it is required to stabilize and induce conformational changes of the catalytic subunit. The protein is tRNA (guanine-N(7)-)-methyltransferase non-catalytic subunit TRM82 of Lodderomyces elongisporus (strain ATCC 11503 / CBS 2605 / JCM 1781 / NBRC 1676 / NRRL YB-4239) (Yeast).